We begin with the raw amino-acid sequence, 201 residues long: UPF0637 protein LSEI_1198 (201 aa).

This sequence belongs to the UPF0637 family.

The protein is UPF0637 protein LSEI_1198 of Lacticaseibacillus paracasei (strain ATCC 334 / BCRC 17002 / CCUG 31169 / CIP 107868 / KCTC 3260 / NRRL B-441) (Lactobacillus paracasei).